A 283-amino-acid polypeptide reads, in one-letter code: MGNANGKDEDAAAGSGGADVTSSSARSNGGDPSARSRHRRPSSDSMSSSPPGSPARSPSPFLFAPQVPVAPLQRANAPPPNNIQWNQSQRVFDNPPEQGIPTIITWNQGGNDVAVEGSWDNWRSRKKLQKSGKDHSILFVLPSGIYHYKVIVDGESKYIPDLPFVADEVGNVCNILDVHNFVPENPESIVEFEAPPSPDHSYGQTLPAAEDYAKEPLAVPPQLHLTLLGTTEETAIATKPQHVVLNHVFIEQGWTPQSIVALGLTHRFESKYITVVLYKPLTR.

Basic and acidic residues predominate over residues 1–10 (MGNANGKDED). Residues 1–63 (MGNANGKDED…PARSPSPFLF (63 aa)) are disordered. A lipid anchor (N-myristoyl glycine) is attached at G2. Positions 43 to 60 (SDSMSSSPPGSPARSPSP) are enriched in low complexity. The segment at 101–178 (PTIITWNQGG…VGNVCNILDV (78 aa)) is kinase-interacting sequence (KIS). Positions 215–283 (EPLAVPPQLH…TVVLYKPLTR (69 aa)) are association with SNF1 complex (ASC).

It belongs to the 5'-AMP-activated protein kinase beta subunit family. In terms of assembly, subunit of a probable heterotrimeric complex consisting of an alpha catalytic (KIN10 or KIN11) subunit, and a beta (KINB) and a gamma (KING or SNF4) non-catalytic regulatory subunits. Interacts with SNF4 and CBL1. Interacts with FLZ1, FLZ2, FLZ8, FLZ9, FLZ10, FLZ12, FLZ13, FLZ14 and FLZ15. Sumoylated by SIZ1. Expressed in vegetative organs and, to lower extent, in reproductive organs.

It is found in the cell membrane. In terms of biological role, regulatory subunit of the probable trimeric SNF1-related protein kinase (SnRK) complex, which may play a role in a signal transduction cascade regulating gene expression and carbohydrate metabolism in higher plants. The SnRK complex may also be involved in the regulation of fatty acid synthesis by phosphorylation of acetyl-CoA carboxylase and in assimilation of nitrogen by phosphorylating nitrate reductase. The chain is SNF1-related protein kinase regulatory subunit beta-1 (KINB1) from Arabidopsis thaliana (Mouse-ear cress).